The sequence spans 331 residues: Nucleotide-binding protein SGR_5570 (331 aa).

The segment at 1 to 43 is disordered; the sequence is MTENTHETAPNTADTDTADFDTADTDRADGAADVSTNTPNETG. 55-62 serves as a coordination point for ATP; the sequence is GMSGAGRS. 106–109 is a binding site for GTP; it reads DVRG.

This sequence belongs to the RapZ-like family.

Displays ATPase and GTPase activities. This is Nucleotide-binding protein SGR_5570 from Streptomyces griseus subsp. griseus (strain JCM 4626 / CBS 651.72 / NBRC 13350 / KCC S-0626 / ISP 5235).